A 197-amino-acid polypeptide reads, in one-letter code: Small ribosomal subunit protein uS4B (197 aa).

In terms of domain architecture, S4 RNA-binding spans 88 to 153 (CRLDNMVYRM…IEKYLSNLKN (66 aa)).

Belongs to the universal ribosomal protein uS4 family. In terms of assembly, part of the 30S ribosomal subunit. Contacts protein S5. The interaction surface between S4 and S5 is involved in control of translational fidelity.

Its function is as follows. One of the primary rRNA binding proteins, it binds directly to 16S rRNA where it nucleates assembly of the body of the 30S subunit. Functionally, with S5 and S12 plays an important role in translational accuracy. This Alkaliphilus oremlandii (strain OhILAs) (Clostridium oremlandii (strain OhILAs)) protein is Small ribosomal subunit protein uS4B.